A 379-amino-acid chain; its full sequence is RING finger protein 215 (379 aa).

2 disordered regions span residues 1-21 (MGSA…PPSP) and 44-63 (AADG…RSVR). Topologically, residues 1–24 (MGSADRPALRSPSLPPPPPSPPSP) are cytoplasmic. Residues 25–45 (LLLLLPLLPLWLGLMGPGAAA) traverse the membrane as a helical segment. The Extracellular portion of the chain corresponds to 46-252 (DGSEPATGEG…GGAQAQEQKP (207 aa)). A glycan (N-linked (GlcNAc...) asparagine) is linked at Asn188. Residues 253-273 (LQQLWNAILLVAMLLCTGLVV) form a helical membrane-spanning segment. Residues 274-379 (QAQRQASRQN…NVLGNHYSDD (106 aa)) lie on the Cytoplasmic side of the membrane. The segment at 327-368 (CAVCLDYFCNKQWLRVLPCKHEFHRDCVDPWLMLQQTCPLCK) adopts an RING-type; atypical zinc-finger fold.

It is found in the membrane. The chain is RING finger protein 215 (Rnf215) from Mus musculus (Mouse).